A 427-amino-acid chain; its full sequence is Serine--tRNA ligase (427 aa).

Residue 231 to 233 (TAE) participates in L-serine binding. 262 to 264 (RSE) is a binding site for ATP. Residue Glu-285 coordinates L-serine. Residue 349–352 (EISS) coordinates ATP. L-serine is bound at residue Ser-385.

The protein belongs to the class-II aminoacyl-tRNA synthetase family. Type-1 seryl-tRNA synthetase subfamily. Homodimer. The tRNA molecule binds across the dimer.

The protein localises to the cytoplasm. It catalyses the reaction tRNA(Ser) + L-serine + ATP = L-seryl-tRNA(Ser) + AMP + diphosphate + H(+). The enzyme catalyses tRNA(Sec) + L-serine + ATP = L-seryl-tRNA(Sec) + AMP + diphosphate + H(+). Its pathway is aminoacyl-tRNA biosynthesis; selenocysteinyl-tRNA(Sec) biosynthesis; L-seryl-tRNA(Sec) from L-serine and tRNA(Sec): step 1/1. Catalyzes the attachment of serine to tRNA(Ser). Is also able to aminoacylate tRNA(Sec) with serine, to form the misacylated tRNA L-seryl-tRNA(Sec), which will be further converted into selenocysteinyl-tRNA(Sec). In Methylococcus capsulatus (strain ATCC 33009 / NCIMB 11132 / Bath), this protein is Serine--tRNA ligase.